A 346-amino-acid polypeptide reads, in one-letter code: fMet-Leu-Phe receptor (346 aa).

N-linked (GlcNAc...) asparagine glycans are attached at residues asparagine 1 and asparagine 7. Topologically, residues 1 to 24 (NSSLPTNISGGTPAVSAGYLFLDI) are extracellular. Residues 25–47 (ITYLVYAVTFVLGVLGNGLVIWV) form a helical membrane-spanning segment. At 48–58 (AGFRMTHTVTT) the chain is on the cytoplasmic side. A helical membrane pass occupies residues 59–80 (ISYLNLAVADFCFTSTLPFFMV). Residues 81–97 (RKAMGGHWPFGWFLCKF) are Extracellular-facing. Residues cysteine 95 and cysteine 173 are joined by a disulfide bond. Residues 98-118 (IFTIVDINLFGSVFLIALIAL) form a helical membrane-spanning segment. Residues 119–137 (DRCVCVLHPVWTQNHRTVS) lie on the Cytoplasmic side of the membrane. A helical membrane pass occupies residues 138–159 (LAKKVIIGPWVMALLLTLPVII). Topologically, residues 160 to 202 (RVTTVPGKMGTVSCTFNFSPWTNDPKERIKVAIAMLTVRGIIR) are extracellular. Residues 203-223 (FIIGFSAPMSIVAVSYGLIAT) traverse the membrane as a helical segment. Over 224-239 (KIHKQGLIKSSRPLRV) the chain is Cytoplasmic. Residues 240–263 (LSFVAAAFFLCWSPYQVVAFIATV) form a helical membrane-spanning segment. The Extracellular portion of the chain corresponds to 264–282 (RIRELLQGMYKEISIAVDV). A helical membrane pass occupies residues 283-302 (TSALAFFNSCLNPMLYVFMG). Residues 303–346 (QDFRERLIHSLPASLERALTEASTQTSDTATNSTLPSAEVALQA) are Cytoplasmic-facing. The segment covering 324–338 (ASTQTSDTATNSTLP) has biased composition (polar residues). Positions 324-346 (ASTQTSDTATNSTLPSAEVALQA) are disordered.

The protein belongs to the G-protein coupled receptor 1 family. Post-translationally, phosphorylated; which is necessary for desensitization.

It localises to the cell membrane. In terms of biological role, high affinity receptor for N-formyl-methionyl peptides (fMLP), which are powerful neutrophil chemotactic factors. Binding of fMLP to the receptor stimulates intracellular calcium mobilization and superoxide anion release. This response is mediated via a G-protein that activates a phosphatidylinositol-calcium second messenger system. Receptor for TAFA4, mediates its effects on chemoattracting macrophages, promoting phagocytosis and increasing ROS release. Receptor for cathepsin CTSG, leading to increased phagocyte chemotaxis. The polypeptide is fMet-Leu-Phe receptor (FPR1) (Pongo pygmaeus (Bornean orangutan)).